A 197-amino-acid chain; its full sequence is Dephospho-CoA kinase (197 aa).

The region spanning 2–197 (RIGLTGGIAS…YDALAKTAHE (196 aa)) is the DPCK domain. 10–15 (ASGKSL) is a binding site for ATP.

It belongs to the CoaE family.

The protein localises to the cytoplasm. The enzyme catalyses 3'-dephospho-CoA + ATP = ADP + CoA + H(+). It functions in the pathway cofactor biosynthesis; coenzyme A biosynthesis; CoA from (R)-pantothenate: step 5/5. In terms of biological role, catalyzes the phosphorylation of the 3'-hydroxyl group of dephosphocoenzyme A to form coenzyme A. This Shouchella clausii (strain KSM-K16) (Alkalihalobacillus clausii) protein is Dephospho-CoA kinase.